The following is a 342-amino-acid chain: MSKEPPNNSREKTKNLLLKLQDNICKNLENIDGKAKFTEESWLREEGGGGRSRVLKNGSIFEQAGVNFSEVYGKELPQSIISQRPEAKGHEWFATGTSMVLHPKNPFIPTVHLNYRYFEAGPVWWFGGGADLTPYYPYLSDVRHFHKEHSNACEKVNKKLHLVFKPWCDEYFFLKHRNESRGIGGIFYDYQDGSGNIYKGSNKDGNAYKESNNIGELNLNWNNLFALAENCGEAFLSSYQPIIEKRVSQNYTKEEREFQLYRRGRYVEFNLVWDRGTIFGLQTNGRTESILMSLPPLARWEYGYKAKQGSREDLLTKIFTRPQDWQNDKVLEEFCLENNIFD.

Residue Ser98 coordinates substrate. A divalent metal cation contacts are provided by His102 and His112. Residue His112 is the Proton donor of the active site. 114–116 (NYR) lines the substrate pocket. A divalent metal cation contacts are provided by His146 and His176. The segment at 266–301 (YVEFNLVWDRGTIFGLQTNGRTESILMSLPPLARWE) is important for dimerization.

The protein belongs to the aerobic coproporphyrinogen-III oxidase family. Homodimer. It depends on a divalent metal cation as a cofactor.

The protein resides in the cytoplasm. It carries out the reaction coproporphyrinogen III + O2 + 2 H(+) = protoporphyrinogen IX + 2 CO2 + 2 H2O. Its pathway is porphyrin-containing compound metabolism; protoporphyrin-IX biosynthesis; protoporphyrinogen-IX from coproporphyrinogen-III (O2 route): step 1/1. Its function is as follows. Involved in the heme and chlorophyll biosynthesis. Catalyzes the aerobic oxidative decarboxylation of propionate groups of rings A and B of coproporphyrinogen-III to yield the vinyl groups in protoporphyrinogen-IX. In Prochlorococcus marinus (strain MIT 9515), this protein is Oxygen-dependent coproporphyrinogen-III oxidase.